We begin with the raw amino-acid sequence, 171 residues long: uncharacterized protein (171 aa).

The signal sequence occupies residues 1–18; that stretch reads MRYSKLTMLIPCALLLSA. A lipid anchor (N-palmitoyl cysteine) is attached at cysteine 19. The S-diacylglycerol cysteine moiety is linked to residue cysteine 19.

Its subcellular location is the cell membrane. This is an uncharacterized protein from Escherichia coli (strain K12).